The sequence spans 707 residues: MFFTQPPHLVKAEELKQEPPKGTAYSVAIPGTEQPGRSRVYRAWNAQKELLTTLDPQVTTAHDMFESTANRQPKNHCLGWRPYNSTTKTWDPYQWLTYETVQKRRAAFGAGLVELHQKHNCHRPGQYGVGLWAQNRPEWQITDLACISQSLYSVSIYDVLAPDATEYIINHAELNCVVTSLPHIPTLLKLKSSLPNLKMIVSLDPLDGPEQNGHSKRALLESMAAGLDLAIYTIDQVEELGLASKRGYNAPSASDIVTINYTSGTTGPPKGVVLTHGNAVAATSCGLTTIGQARGDTMCSYLPLAHIYARLAEHTAFWGGARIGYFHGNIVELVDDLKLLKPTGFMSVPRLYSRFGTAIRAATVEQPGFKGALSRHIVAAKMANMKNPDPSKATIKHALYDRIWAKKVAAALGLERAKYMISGSAPLDPTLHNFLRVATGTDVVQGYGLTESYASATAQSTQDLSSGNCGRLAPCTEACLVSLPDMEYSVEDKPFPRGELLLRGNNMFREYYKNDDETSKAVTEDGWFRTGDVCTVDAQGRFIIIDRRKNVLKLAQGEYISPERLEGVILSELGYVAQAYVHGDSSETFLVGIFGVAPDLFAPYASKVLGKTIAPTDVEGLKEHLNDDKLRRAVLRDLERVAKKHKFAGYERVRNVSLKVDPFTVENNLLTPTLKLKRPPVVKMYRTLLDQLYGQANEEQSAPRAKL.

An ATP-binding site is contributed by 259–270 (INYTSGTTGPPK). Positions 525–549 (DGWFRTGDVCTVDAQGRFIIIDRRK) are fatty acid-binding. The Peroxisome targeting signal signature appears at 705–707 (AKL).

This sequence belongs to the ATP-dependent AMP-binding enzyme family.

The protein resides in the peroxisome matrix. It catalyses the reaction (4E,8E)-10-(4-hydroxy-6-methoxy-7-methyl-3-oxo-1,3-dihydro-2-benzofuran-5-yl)-4,8-dimethyldeca-4,8-dienoate + ATP + CoA = (4E,8E)-10-(4-hydroxy-6-methoxy-7-methyl-3-oxo-1,3-dihydro-2-benzofuran-5-yl)-4,8-dimethyldeca-4,8-dienoyl-CoA + AMP + diphosphate. It participates in secondary metabolite biosynthesis; terpenoid biosynthesis. Its function is as follows. Acyl-CoA ligase involved in the biosynthesis of mycophenolic acid (MPA), the first isolated antibiotic natural product in the world obtained from a culture of Penicillium brevicompactum in 1893. The peroxisomal acyl-CoA ligase 891 converts the intermediate MFDHMP-3C into MFDHMP-3C-CoA which impairs its diffusion from the peroxisome. The first step of the pathway is the synthesis of 5-methylorsellinic acid (5MOA) by the cytosolic polyketide synthase mpaC. 5MOA is then converted to the phthalide compound 5,7-dihydroxy-4,6-dimethylphthalide (DHMP) by the endoplasmic reticulum-bound cytochrome P450 monooxygenase mpaDE. MpaDE first catalyzes hydroxylation of 5-MOA to 4,6-dihydroxy-2-(hydroxymethyl)-3-methylbenzoic acid (DHMB). MpaDE then acts as a lactone synthase that catalyzes the ring closure to convert DHMB into DHMP. The next step is the prenylation of DHMP by the Golgi apparatus-associated prenyltransferase mpaA to yield farnesyl-DHMP (FDHMP). The ER-bound oxygenase mpaB then mediates the oxidative cleavage the C19-C20 double bond in FDHMP to yield FDHMP-3C via a mycophenolic aldehyde intermediate. The O-methyltransferase mpaG catalyzes the methylation of FDHMP-3C to yield MFDHMP-3C. After the cytosolic methylation of FDHMP-3C, MFDHMP-3C enters into peroxisomes probably via free diffusion due to its low molecular weight. Upon a peroxisomal CoA ligation reaction, catalyzed by a beta-oxidation component enzyme acyl-CoA ligase ACL891, MFDHMP-3C-CoA would then be restricted to peroxisomes for the following beta-oxidation pathway steps. The peroxisomal beta-oxidation machinery than converts MFDHMP-3C-CoA into MPA_CoA, via a beta-oxidation chain-shortening process. Finally mpaH acts as a peroxisomal acyl-CoA hydrolase with high substrate specificity toward MPA-CoA to release the final product MPA. The polypeptide is Acyl-CoA ligase 891, peroxisomal (Penicillium brevicompactum).